Consider the following 158-residue polypeptide: Transcription elongation factor GreA (158 aa).

The stretch at methionine 1–glutamine 67 forms a coiled coil.

The protein belongs to the GreA/GreB family.

In terms of biological role, necessary for efficient RNA polymerase transcription elongation past template-encoded arresting sites. The arresting sites in DNA have the property of trapping a certain fraction of elongating RNA polymerases that pass through, resulting in locked ternary complexes. Cleavage of the nascent transcript by cleavage factors such as GreA or GreB allows the resumption of elongation from the new 3'terminus. GreA releases sequences of 2 to 3 nucleotides. This Trichlorobacter lovleyi (strain ATCC BAA-1151 / DSM 17278 / SZ) (Geobacter lovleyi) protein is Transcription elongation factor GreA.